Consider the following 1064-residue polypeptide: Lysine-specific demethylase 4A (1064 aa).

Ala-2 bears the N-acetylalanine mark. Residues 14 to 56 (IMTFYPTMEEFRNFSRYIAYIESQGAHRAGLAKVVPPKEWKPR) enclose the JmjN domain. Position 132 (Tyr-132) interacts with 2-oxoglutarate. In terms of domain architecture, JmjC spans 142–308 (EKHVDEWNIG…YGKQAVLCSC (167 aa)). His-188 and Glu-190 together coordinate Fe cation. 2-oxoglutarate is bound by residues Asn-198 and Lys-206. Residues Cys-234 and His-240 each coordinate Zn(2+). Position 241 (Lys-241) interacts with 2-oxoglutarate. Position 276 (His-276) interacts with Fe cation. The Zn(2+) site is built by Cys-306 and Cys-308. The segment at 358 to 384 (ELPPRAGNEEECPEEDMEGVEDGEEGD) is disordered. A compositionally biased stretch (acidic residues) spans 366–382 (EEECPEEDMEGVEDGEE). Lys-471 participates in a covalent cross-link: (Microbial infection) Glycyl lysine isopeptide (Lys-Gly) (interchain with G-Cter in SUMO). Disordered regions lie at residues 501–537 (FSGS…RAQG) and 616–641 (SDDE…KPLS). Residues 509–532 (SSSLGSGSSRDSISSDSETSEPLS) are compositionally biased toward low complexity. Ser-523 carries the post-translational modification Phosphoserine. Residues 597–638 (RQPLSKLPRHHPLVLQECVSDDETSEQLTPEEEAEETEAWAK) form an interaction with NCOR1 region. Acidic residues predominate over residues 616–634 (SDDETSEQLTPEEEAEETE). The PHD-type 1 zinc-finger motif lies at 709–767 (MCFTSTGCSTDINLSTPYLEEDGTSILVSCKKCSVRVHASCYGVPPAKASEDWMCSRCS). A C2HC pre-PHD-type zinc finger spans residues 772 to 805 (EEDCCLCSLRGGALQRANDDRWVHVSCAVAILEA). A PHD-type 2 zinc finger spans residues 828 to 885 (LKCIFCKKRRKRTAGCCVQCSHGRCPTAFHVSCAQAAGVMMQPDDWPFVVFITCFRHK). Tudor domains follow at residues 897–954 (QSIT…CLQF) and 955–1011 (GPPA…EELP).

The protein belongs to the JHDM3 histone demethylase family. In terms of assembly, interacts with histone deacetylase proteins HDAC1, HDAC2 and HDAC3. Interacts with RB and NCOR1. Interacts with VRK1. Interacts with FBXO22; this interaction promotes KDM4A ubiquitination. (Microbial infection) Interacts with HTLV-1 Tax protein. It depends on Fe(2+) as a cofactor. In terms of processing, (Microbial infection) SUMOylated by human herpesvirus 8 E3 SUMO-protein ligase K-bZIP/K8 at Lys-471; thereby modulating the chromatin binding and histone demethylase activity of KDM4A. Post-translationally, ubiquitinated by RNF8 and RNF168 following DNA damage, leading to its degradation. Degradation promotes accessibility of H4K20me2 mark for DNA repair protein TP53BP1, which is then recruited. Also ubiquitinated by the SCF(FBXO22) complex; leading to proteasomal degradation. As to expression, ubiquitous.

Its subcellular location is the nucleus. It catalyses the reaction N(6),N(6),N(6)-trimethyl-L-lysyl(9)-[histone H3] + 2 2-oxoglutarate + 2 O2 = N(6)-methyl-L-lysyl(9)-[histone H3] + 2 formaldehyde + 2 succinate + 2 CO2. It carries out the reaction N(6),N(6),N(6)-trimethyl-L-lysyl(36)-[histone H3] + 2 2-oxoglutarate + 2 O2 = N(6)-methyl-L-lysyl(36)-[histone H3] + 2 formaldehyde + 2 succinate + 2 CO2. Its activity is regulated as follows. Several specific inhibitors are being developed and tested. In terms of biological role, histone demethylase that specifically demethylates 'Lys-9' and 'Lys-36' residues of histone H3, thereby playing a central role in histone code. Does not demethylate histone H3 'Lys-4', H3 'Lys-27' nor H4 'Lys-20'. Demethylates trimethylated H3 'Lys-9' and H3 'Lys-36' residue, while it has no activity on mono- and dimethylated residues. Demethylation of Lys residue generates formaldehyde and succinate. Participates in transcriptional repression of ASCL2 and E2F-responsive promoters via the recruitment of histone deacetylases and NCOR1, respectively. Crucial for muscle differentiation, promotes transcriptional activation of the Myog gene by directing the removal of repressive chromatin marks at its promoter. Lacks the N-terminal demethylase domain. The protein is Lysine-specific demethylase 4A (KDM4A) of Homo sapiens (Human).